The following is a 769-amino-acid chain: PDZ domain-containing protein 4 (769 aa).

One can recognise a PDZ domain in the interval 130-214 (EVELYKSSHR…TNISLLVARP (85 aa)). The disordered stretch occupies residues 221-315 (RWKDSDRDDF…TNTPGSLRKF (95 aa)). A compositionally biased stretch (acidic residues) spans 229–239 (DFLDDFGSENE). Ser-236 carries the phosphoserine modification. Residues 282–298 (RTDESTRNEESSEHDLL) are compositionally biased toward basic and acidic residues. A coiled-coil region spans residues 389-419 (VNRNESLGHEMAMLEEELRHLEFKCRNILRA). A disordered region spans residues 445 to 579 (ASEPKKHELS…RHRGQGQEGE (135 aa)). Residues 447–467 (EPKKHELSDISELPEKSDKDS) are compositionally biased toward basic and acidic residues. Ser-454 is subject to Phosphoserine. Over residues 468-479 (TSAYNTGESCRS) the composition is skewed to polar residues. The span at 530-547 (LSRDPEAGRRQHAEERGR) shows a compositional bias: basic and acidic residues.

As to expression, brain-specific. Expressed in fetal and adult brain. Up-regulated in synovial carcinomas.

Its subcellular location is the cytoplasm. The protein resides in the cell cortex. The polypeptide is PDZ domain-containing protein 4 (PDZD4) (Homo sapiens (Human)).